Consider the following 260-residue polypeptide: uncharacterized protein (260 aa).

The first 22 residues, 1 to 22 (MKSIKRIGLCISLLILIIFATS), serve as a signal peptide directing secretion. Cys23 is lipidated: N-palmitoyl cysteine. Cys23 is lipidated: S-diacylglycerol cysteine.

This sequence belongs to the staphylococcal tandem lipoprotein family.

It localises to the cell membrane. This is an uncharacterized protein from Staphylococcus aureus (strain N315).